The sequence spans 317 residues: Ribosomal protein L11 methyltransferase (317 aa).

Residues T158, G179, D201, and N244 each contribute to the S-adenosyl-L-methionine site.

This sequence belongs to the methyltransferase superfamily. PrmA family.

The protein resides in the cytoplasm. It carries out the reaction L-lysyl-[protein] + 3 S-adenosyl-L-methionine = N(6),N(6),N(6)-trimethyl-L-lysyl-[protein] + 3 S-adenosyl-L-homocysteine + 3 H(+). Methylates ribosomal protein L11. This is Ribosomal protein L11 methyltransferase from Streptococcus mutans serotype c (strain ATCC 700610 / UA159).